The primary structure comprises 83 residues: MSSGRLLLLLGLLTLWAELTPVSGLGRPKFCELPAVSGFCKAYIPSFYYNPDASACQKFIYGGCGGNANKFKTIEECHRTCVG.

A signal peptide spans 1–25 (MSSGRLLLLLGLLTLWAELTPVSGL). The 51-residue stretch at 31–81 (CELPAVSGFCKAYIPSFYYNPDASACQKFIYGGCGGNANKFKTIEECHRTC) folds into the BPTI/Kunitz inhibitor domain. Cystine bridges form between Cys31/Cys81, Cys40/Cys64, and Cys56/Cys77.

Expressed by the venom gland.

The protein resides in the secreted. Its function is as follows. Serine protease inhibitor that strongly inhibits chymotrypsin (Ki=84.6 nM) and trypsin (Ki=391 nM). The chain is Kunitz-type serine protease inhibitor TCI from Ophiophagus hannah (King cobra).